The chain runs to 90 residues: Guanine nucleotide-binding protein subunit gamma (90 aa).

Cysteine 86 carries S-palmitoyl cysteine lipidation. Position 87 is a cysteine methyl ester (cysteine 87). Cysteine 87 carries the S-farnesyl cysteine lipid modification. The propeptide at 88 to 90 is removed in mature form; it reads TIM.

The protein belongs to the G protein gamma family. In terms of assembly, g proteins are composed of 3 units, alpha, beta and gamma.

It localises to the membrane. The chain is Guanine nucleotide-binding protein subunit gamma from Kluyveromyces lactis (strain ATCC 8585 / CBS 2359 / DSM 70799 / NBRC 1267 / NRRL Y-1140 / WM37) (Yeast).